The chain runs to 327 residues: Ribosomal RNA large subunit methyltransferase F (327 aa).

Positions 1–24 are disordered; it reads MPRKTSSQPRPAEPKAVLHPRNRH.

This sequence belongs to the methyltransferase superfamily. METTL16/RlmF family.

It localises to the cytoplasm. The catalysed reaction is adenosine(1618) in 23S rRNA + S-adenosyl-L-methionine = N(6)-methyladenosine(1618) in 23S rRNA + S-adenosyl-L-homocysteine + H(+). Its function is as follows. Specifically methylates the adenine in position 1618 of 23S rRNA. This chain is Ribosomal RNA large subunit methyltransferase F, found in Stutzerimonas stutzeri (strain A1501) (Pseudomonas stutzeri).